We begin with the raw amino-acid sequence, 220 residues long: CRIB domain-containing protein RIC3 (220 aa).

The CRIB domain maps to 28–41 (IGFPTDVKHVAHIG). Positions 39–220 (HIGSDGPATN…CNDNNISDKE (182 aa)) are disordered. The span at 61 to 77 (NENGQVVSRADANNNQI) shows a compositional bias: polar residues. Positions 108-121 (NGSPPRRNSSASAS) are enriched in low complexity. 2 stretches are compositionally biased toward basic residues: residues 127–136 (NTRRHHRSRH) and 172–184 (HSRKSTSRHRKPK). The segment covering 209–220 (DTCNDNNISDKE) has biased composition (polar residues).

Interacts with ARAC11/ROP1. In terms of tissue distribution, expressed in flowers and pollen.

It is found in the cytoplasm. In terms of biological role, functions as a downstream effector of Rho-related GTP binding proteins of the 'Rho of Plants' (ROPs) family. Participates in the propagation of ROP GTPase signals in specific cellular responses. Functions as a downstream effector of ARAC11/ROP1 to activate calcium signaling that leads to F-actin disassembly associated with exocytosis in the tip of the growing pollen tube. Counteracts the ARAC11/ROP1-RIC4 pathway, which promotes apical F-actin assembly associated with vesicle accumulation, to control actin dynamics and pollen tube apical growth. In Arabidopsis thaliana (Mouse-ear cress), this protein is CRIB domain-containing protein RIC3 (RIC3).